Here is a 360-residue protein sequence, read N- to C-terminus: 1-aminocyclopropane-1-carboxylate oxidase homolog 6 (360 aa).

One can recognise a Fe2OG dioxygenase domain in the interval 208–309 (KGLLLLCHYY…ISVASFFSTS (102 aa)). Residues H232, D234, and H288 each contribute to the Fe cation site. Residue R299 participates in 2-oxoglutarate binding.

The protein belongs to the iron/ascorbate-dependent oxidoreductase family. Fe(2+) is required as a cofactor. In terms of tissue distribution, constitutively expressed in leaves and blades.

The sequence is that of 1-aminocyclopropane-1-carboxylate oxidase homolog 6 from Arabidopsis thaliana (Mouse-ear cress).